Here is an 896-residue protein sequence, read N- to C-terminus: Vacuolar zinc transporter TgZnT (896 aa).

Residues 1 to 472 (MPFSCFVFSQ…ETGTQRARRK (472 aa)) lie on the Cytoplasmic side of the membrane. The span at 82-91 (VLSSRGDESV) shows a compositional bias: basic and acidic residues. Disordered stretches follow at residues 82–104 (VLSS…SPGF), 205–227 (MKEI…RPCA), and 255–329 (SSSC…SSAS). Composition is skewed to low complexity over residues 210 to 225 (SPRS…SSRP) and 255 to 266 (SSSCCSRSNSSS). The segment covering 303 to 322 (VHERRAEATCCAPRDRHGGD) has biased composition (basic and acidic residues). Residues 473 to 493 (LVMASMVCCVFMFVEIVAGVL) form a helical membrane-spanning segment. At 494 to 502 (ANSLALMTD) the chain is on the vacuolar side. Residues 503–523 (ASHLLSDLCAFLISLFALWVS) traverse the membrane as a helical segment. Over 524 to 539 (ELKGNPSMSFGYHRAE) the chain is Cytoplasmic. The chain crosses the membrane as a helical span at residues 540-560 (ILGALLSVFLIWVLTAVLIYA). Residues 561–573 (ACFRLVDPPQVDG) are Vacuolar-facing. A helical membrane pass occupies residues 574-594 (ELMFWTALLGTLANLFMTHIL). Residues 595–737 (KVHSHGIGQV…YENMNLRAAY (143 aa)) are Cytoplasmic-facing. Residues 621 to 707 (LQASSSSPEK…RPFSASSAGS (87 aa)) form a disordered region. Residues 656-680 (RDAEAGRDAEAGRDAEAGRDAETGR) show a composition bias toward basic and acidic residues. The helical transmembrane segment at 738–758 (IHALGDLLQNIGVMIASALIW) threads the bilayer. Residues 759 to 762 (WRPD) lie on the Vacuolar side of the membrane. A helical membrane pass occupies residues 763–783 (WAIADPICTFIFSIFVLFTTL). The Cytoplasmic portion of the chain corresponds to 784 to 896 (SILKEALNVL…CSDPMKVFRR (113 aa)).

This sequence belongs to the cation diffusion facilitator (CDF) transporter (TC 2.A.4) family. SLC30A subfamily.

The protein localises to the vacuole membrane. It localises to the cytoplasmic vesicle membrane. In terms of biological role, vacuolar zinc transporter that is probably involved in the transfer of zinc ions from the cytosol to the vacuole for intracellular storage. Plays an essential role in extracellular zinc tolerance. This Toxoplasma gondii (strain ATCC 50853 / GT1) protein is Vacuolar zinc transporter TgZnT.